The following is a 653-amino-acid chain: Sodium-dependent phosphate transporter 2 (653 aa).

A topological domain (extracellular) is located at residue M1. A helical membrane pass occupies residues 2–22 (VLVEYLWMVIVGFIIAFILAF). Residues 23–46 (SVGANDVANSFGTAVGSGVVTLRQ) lie on the Cytoplasmic side of the membrane. The helical transmembrane segment at 47-67 (ACILASIFETTGSVLLGAKVG) threads the bilayer. At 68–86 (ETIRKGIIDVNLYNNTVDL) the chain is on the extracellular side. An N-linked (GlcNAc...) asparagine glycan is attached at N81. Residues 87-107 (LMAGEVSAMVGSAVWQLIASF) traverse the membrane as a helical segment. The Cytoplasmic segment spans residues 108–109 (LR). Residues 110 to 130 (LPISGTHCIVGATIGFSLVAI) form a helical membrane-spanning segment. Residues 131–142 (GTHGVQWMQLVK) lie on the Extracellular side of the membrane. A helical transmembrane segment spans residues 143–163 (IVASWFISPLLSGLMSGALFL). Residues 164–187 (MIKFFILKKEDPVPNGLKALPVFY) are Cytoplasmic-facing. The chain crosses the membrane as a helical span at residues 188–208 (AATIGINVFSILYTGAPLLGL). Residues 209 to 217 (ESFPVWATA) lie on the Extracellular side of the membrane. A helical membrane pass occupies residues 218–238 (LLSIGIAIIFALIVWFFVCPW). At 239-483 (MKKKIASRLK…EDKEEKDKSE (245 aa)) the chain is on the cytoplasmic side. A helical membrane pass occupies residues 484–504 (VHLLFHFLQILTACFGSFAHG). Over 505–532 (GNDVSNAIGPLVALWLIYEQGGVMQEAS) the chain is Extracellular. The helical transmembrane segment at 533–553 (TPVWLLLYGGVGICAGLWVWG) threads the bilayer. The Cytoplasmic portion of the chain corresponds to 554 to 572 (RRVIQTMGKDLTPITPSSG). The chain crosses the membrane as a helical span at residues 573-587 (FTIELASAFTVVVAS). The Extracellular portion of the chain corresponds to 588 to 594 (NIGLPIS). A helical transmembrane segment spans residues 595–610 (TTHCKVGSVVAVGWIR). The Cytoplasmic segment spans residues 611-622 (SRKAVDWRLFRN). Residues 623 to 643 (IFLAWFVTVPVAGLFSAGVMA) form a helical membrane-spanning segment. Residues 644–653 (ILQYGILPYV) are Extracellular-facing.

This sequence belongs to the inorganic phosphate transporter (PiT) (TC 2.A.20) family. As to quaternary structure, homodimer.

The protein localises to the cell membrane. Its subcellular location is the apical cell membrane. The enzyme catalyses 2 Na(+)(out) + phosphate(out) = 2 Na(+)(in) + phosphate(in). In terms of biological role, sodium-phosphate symporter which preferentially transports the monovalent form of phosphate with a stoichiometry of two sodium ions per phosphate ion. The protein is Sodium-dependent phosphate transporter 2 (slc20a2) of Xenopus tropicalis (Western clawed frog).